A 428-amino-acid polypeptide reads, in one-letter code: Bifunctional IPC transferase and DIPP synthase (428 aa).

A mobA-like NTP transferase region spans residues 2 to 227; the sequence is VETAVILAGG…KAKKYLVKTA (226 aa). Residues 8–10, Lys-25, Glu-80, and Glu-116 contribute to the CTP site; that span reads LAG. Glu-116 provides a ligand contact to Mg(2+). Residues 228 to 425 are CDP-alcohol phosphatidyltransferases; that stretch reads IKGVGDGFIS…LTIYLVWKKK (198 aa). The next 3 membrane-spanning stretches (helical) occupy residues 266–286, 336–356, and 389–409; these read FLLGMFSALVAYFSPALGGIL, PSWDFMPWVFAALFGSVMVSY, and MIMIFTILGWIKALFVVLAII.

This sequence in the N-terminal section; belongs to the MobA family. It in the C-terminal section; belongs to the CDP-alcohol phosphatidyltransferase class-I family. Mg(2+) is required as a cofactor.

It localises to the membrane. The catalysed reaction is 1D-myo-inositol 3-phosphate + CTP + H(+) = CDP-1L-myo-inositol + diphosphate. The enzyme catalyses CDP-1L-myo-inositol + 1D-myo-inositol 3-phosphate = bis(1L-myo-inositol) 3,1'-phosphate 1-phosphate + CMP + H(+). In terms of biological role, involved in biosynthesis of di-myo-inositol phosphate (DIP), a widespread organic solute in microorganisms adapted to hot environments. Catalyzes the condensation of CTP and L-myo-inositol-1-phosphate into CDP-L-myo-inositol, as well as the biosynthesis of di-myo-inositol-1,3'-phosphate-1'-phosphate (DIPP) from CDP-L-myo-inositol and L-myo-inositol-1-phosphate. This is Bifunctional IPC transferase and DIPP synthase (spsI) from Aquifex aeolicus (strain VF5).